We begin with the raw amino-acid sequence, 397 residues long: Enoyl-[acyl-carrier-protein] reductase [NADH] (397 aa).

Residues 48–53 (GASTGY), 74–75 (FE), 111–112 (DA), and 139–140 (VA) each bind NAD(+). Residue Tyr-225 participates in substrate binding. The active-site Proton donor is Tyr-235. Residues Lys-244 and 273-275 (VVT) contribute to the NAD(+) site.

Belongs to the TER reductase family. In terms of assembly, monomer.

It catalyses the reaction a 2,3-saturated acyl-[ACP] + NAD(+) = a (2E)-enoyl-[ACP] + NADH + H(+). Its pathway is lipid metabolism; fatty acid biosynthesis. Functionally, involved in the final reduction of the elongation cycle of fatty acid synthesis (FAS II). Catalyzes the reduction of a carbon-carbon double bond in an enoyl moiety that is covalently linked to an acyl carrier protein (ACP). The protein is Enoyl-[acyl-carrier-protein] reductase [NADH] of Burkholderia mallei (strain NCTC 10247).